A 138-amino-acid polypeptide reads, in one-letter code: Acidic phospholipase A2 DsM-a2/DsM-a2' (138 aa).

An N-terminal signal peptide occupies residues 1 to 16 (MRTLWIVAVCLIGVEG). 7 disulfide bridges follow: Cys42-Cys131, Cys44-Cys60, Cys59-Cys111, Cys65-Cys138, Cys66-Cys104, Cys73-Cys97, and Cys91-Cys102. Residues Tyr43, Gly45, and Gly47 each coordinate Ca(2+). Residue His63 is part of the active site. Asp64 is a binding site for Ca(2+). The active site involves Asp105.

The protein belongs to the phospholipase A2 family. Group II subfamily. D49 sub-subfamily. The cofactor is Ca(2+). Expressed by the venom gland.

It is found in the secreted. The catalysed reaction is a 1,2-diacyl-sn-glycero-3-phosphocholine + H2O = a 1-acyl-sn-glycero-3-phosphocholine + a fatty acid + H(+). Exhibits high hydrolytic activities and shows strong preference for the anionic micelles (dPPC with deoxycholate) to the zwitterionic micelles (dPPC with Triton X-100). PLA2 catalyzes the calcium-dependent hydrolysis of the 2-acyl groups in 3-sn-phosphoglycerides. The polypeptide is Acidic phospholipase A2 DsM-a2/DsM-a2' (Daboia siamensis (Eastern Russel's viper)).